The chain runs to 387 residues: SLC2A4 regulator (387 aa).

2 disordered regions span residues 1-97 (MERP…RATP) and 139-179 (EALV…PPEA). The span at 27–36 (GPGPRAAPVT) shows a compositional bias: low complexity. The C2H2-type zinc finger occupies 200–225 (FQCLWKSCGKVLSTASAMQRHIRLVH). Residues 253 to 263 (LTDGLSSLTPV) carry the Nuclear export signal motif. A phosphoserine mark is found at S264 and S268. The interval 283–305 (EPPALPSPLRPPAPPLPPPPVLS) is disordered. The segment covering 285 to 303 (PALPSPLRPPAPPLPPPPV) has biased composition (pro residues). Residues 351–354 (RKPR) carry the Nuclear localization signal motif.

In terms of assembly, interacts with MEF2A. As to expression, according to PubMed:14630949, expressed in heart, skeletal muscle, liver, kidney and pancreas; undetectable in lung, placenta or brain. According to PubMed:14625278, ubiquitously expressed, with lowest expression in brain and ileum.

The protein localises to the cytoplasm. It is found in the nucleus. In terms of biological role, transcription factor involved in SLC2A4 and HD gene transactivation. Binds to the consensus sequence 5'-GCCGGCG-3'. The polypeptide is SLC2A4 regulator (SLC2A4RG) (Homo sapiens (Human)).